The sequence spans 2349 residues: Reducing polyketide synthase hmp8 (2349 aa).

The Ketosynthase family 3 (KS3) domain maps to 9 to 435; the sequence is HVPVAIIGLA…GTNGHVVLEA (427 aa). Catalysis depends on for beta-ketoacyl synthase activity residues C182, H317, and H357. The tract at residues 551 to 856 is malonyl-CoA:ACP transacylase (MAT) domain; the sequence is FVFTGQGAQW…SHNGIKNVAY (306 aa). Positions 930 to 1066 are N-terminal hotdog fold; the sequence is RSLIGAPVPM…GLVAIDYEES (137 aa). Positions 930–1250 constitute a PKS/mFAS DH domain; it reads RSLIGAPVPM…TSELDMDSGK (321 aa). Positions 932-1244 are dehydratase (DH) domain; that stretch reads LIGAPVPMMA…SVKDFRTSEL (313 aa). H962 (proton acceptor; for dehydratase activity) is an active-site residue. Residues 1094 to 1250 are C-terminal hotdog fold; sequence PEHYAHDKFY…TSELDMDSGK (157 aa). Residue D1160 is the Proton donor; for dehydratase activity of the active site. Positions 1641-1953 are enoyl reductase (ER) domain; it reads GLLDTLKFVP…QGKHRGKMVL (313 aa). The tract at residues 1977-2157 is ketoreductase (KR) domain; the sequence is ATYLFVGGLG…ISVNLGIMRD (181 aa). Positions 2267-2344 constitute a Carrier domain; it reads EAAEIITDAL…SFAVKIAEKS (78 aa). The residue at position 2304 (S2304) is an O-(pantetheine 4'-phosphoryl)serine.

It participates in secondary metabolite biosynthesis. Reducing polyketide synthase; part of the gene cluster that mediates the biosynthesis of hypothemycin, a resorcylic acid lactone (RAL) that irreversibly inhibits a subset of protein kinases with a conserved cysteine in the ATP binding site such as human ERK2. The first step is performed by both PKSs hmp3 and hmp8 and leads to the production of 7',8'-dehydrozearalenol (DHZ). The highly reducing PKS hpm8 synthesizes the reduced hexaketide (7S,11S,2E,8E)-7,11-dihydroxy-dodeca-2,8-dienoate, which is transferred downstream to the non-reducing PKS hpm3. Hpm3 then extends the reduced hexaketide to a nonaketide, after which regioselective cyclization and macrolactonization affords DHZ. The next step is the conversion of DHZ into aigialomycin C and is performed by the O-methyltransferase hmp5, the FAD-binding monooxygenase hmp7, and the cytochrome P450 monooxygenase hmp1. The wide substrate tolerance of the hmp5 and hmp7 implies that the reactions from DHZ to aigialomycin C can occur in any order. The steps from aigialomycin C to hypothemycin are less well established. The FAD-linked oxidoreductase hmp9 presumably catalyzes oxidation of the C-6' hydroxyl to a ketone. The timing of this oxidation is important, since the resulting enone functional group is a Michael acceptor that can react spontaneously with glutathione, an abundant metabolite in fungal cells. The glutathione S-transferase hmp2 catalyzes cis-trans isomerization of the 7',8' double bond with equilibrium favoring the trans isomer. The hpm6-encoded transporter might preferentially pump hypothemycin out of the cell relative to the trans isomer aigialomycin A. The cis-to-trans isomerization may be coupled with C-4' hydroxylation, since all known hypothemycin analogs containing the enone functional group also have hydroxyl groups at both C-4' and C-5'. In Hypomyces subiculosus (Nectria subiculosa), this protein is Reducing polyketide synthase hmp8.